Consider the following 168-residue polypeptide: Pathogenesis-related protein 1B (168 aa).

The N-terminal stretch at 1–30 (MGFFLFSQMPSFFLVSTLLLFLIISHSSHA) is a signal peptide. Residues 38 to 156 (LDAHNTARAD…NGGYVVSCNY (119 aa)) form the SCP domain.

This sequence belongs to the CRISP family. In terms of processing, three disulfide bonds are present.

Its subcellular location is the vacuole. Its function is as follows. Probably involved in the defense reaction of plants against pathogens. This is Pathogenesis-related protein 1B from Nicotiana tabacum (Common tobacco).